The following is a 303-amino-acid chain: UDP-3-O-acyl-N-acetylglucosamine deacetylase (303 aa).

Residues H78, H237, and D241 each contribute to the Zn(2+) site. The Proton donor role is filled by H264.

The protein belongs to the LpxC family. It depends on Zn(2+) as a cofactor.

The enzyme catalyses a UDP-3-O-[(3R)-3-hydroxyacyl]-N-acetyl-alpha-D-glucosamine + H2O = a UDP-3-O-[(3R)-3-hydroxyacyl]-alpha-D-glucosamine + acetate. Its pathway is glycolipid biosynthesis; lipid IV(A) biosynthesis; lipid IV(A) from (3R)-3-hydroxytetradecanoyl-[acyl-carrier-protein] and UDP-N-acetyl-alpha-D-glucosamine: step 2/6. In terms of biological role, catalyzes the hydrolysis of UDP-3-O-myristoyl-N-acetylglucosamine to form UDP-3-O-myristoylglucosamine and acetate, the committed step in lipid A biosynthesis. This Pseudomonas putida (strain GB-1) protein is UDP-3-O-acyl-N-acetylglucosamine deacetylase.